The sequence spans 270 residues: DNA-directed RNA polymerase subunit Rpo3 (270 aa).

[3Fe-4S] cluster-binding residues include Cys-206, Cys-209, and Cys-212.

This sequence belongs to the archaeal Rpo3/eukaryotic RPB3 RNA polymerase subunit family. As to quaternary structure, part of the RNA polymerase complex. [3Fe-4S] cluster serves as cofactor.

It localises to the cytoplasm. It carries out the reaction RNA(n) + a ribonucleoside 5'-triphosphate = RNA(n+1) + diphosphate. Its function is as follows. DNA-dependent RNA polymerase (RNAP) catalyzes the transcription of DNA into RNA using the four ribonucleoside triphosphates as substrates. The sequence is that of DNA-directed RNA polymerase subunit Rpo3 from Methanosphaera stadtmanae (strain ATCC 43021 / DSM 3091 / JCM 11832 / MCB-3).